The sequence spans 159 residues: Phosphopantetheine adenylyltransferase (159 aa).

S9 serves as a coordination point for substrate. Residues 9–10 (SF) and H17 contribute to the ATP site. Residues K41, L73, and K87 each contribute to the substrate site. ATP is bound by residues 88-90 (GLR), E98, and 122-128 (YSFLSSS).

It belongs to the bacterial CoaD family. In terms of assembly, homohexamer. Mg(2+) is required as a cofactor.

The protein localises to the cytoplasm. It carries out the reaction (R)-4'-phosphopantetheine + ATP + H(+) = 3'-dephospho-CoA + diphosphate. It functions in the pathway cofactor biosynthesis; coenzyme A biosynthesis; CoA from (R)-pantothenate: step 4/5. Reversibly transfers an adenylyl group from ATP to 4'-phosphopantetheine, yielding dephospho-CoA (dPCoA) and pyrophosphate. The polypeptide is Phosphopantetheine adenylyltransferase (Streptomyces coelicolor (strain ATCC BAA-471 / A3(2) / M145)).